The chain runs to 196 residues: Adenylate kinase (196 aa).

An ATP-binding site is contributed by 9–17 (GIPGVGKST).

Belongs to the archaeal adenylate kinase family.

It is found in the cytoplasm. The catalysed reaction is AMP + ATP = 2 ADP. In Thermococcus sibiricus (strain DSM 12597 / MM 739), this protein is Adenylate kinase.